We begin with the raw amino-acid sequence, 263 residues long: Endonuclease 8 (263 aa).

The active-site Schiff-base intermediate with DNA is the Pro2. The active-site Proton donor is Glu3. The active-site Proton donor; for beta-elimination activity is the Lys53. 3 residues coordinate DNA: Gln70, Arg125, and Asn169. An FPG-type zinc finger spans residues 229-263; that stretch reads KVFHRDGEACERCGGIIEKTTLSSRPFYWCPHCQK. Residue Arg253 is the Proton donor; for delta-elimination activity of the active site.

The protein belongs to the FPG family. The cofactor is Zn(2+).

The enzyme catalyses 2'-deoxyribonucleotide-(2'-deoxyribose 5'-phosphate)-2'-deoxyribonucleotide-DNA = a 3'-end 2'-deoxyribonucleotide-(2,3-dehydro-2,3-deoxyribose 5'-phosphate)-DNA + a 5'-end 5'-phospho-2'-deoxyribonucleoside-DNA + H(+). In terms of biological role, involved in base excision repair of DNA damaged by oxidation or by mutagenic agents. Acts as a DNA glycosylase that recognizes and removes damaged bases. Has a preference for oxidized pyrimidines, such as thymine glycol, 5,6-dihydrouracil and 5,6-dihydrothymine. Has AP (apurinic/apyrimidinic) lyase activity and introduces nicks in the DNA strand. Cleaves the DNA backbone by beta-delta elimination to generate a single-strand break at the site of the removed base with both 3'- and 5'-phosphates. The polypeptide is Endonuclease 8 (Salmonella dublin (strain CT_02021853)).